The sequence spans 331 residues: Tetraspanin-10 (331 aa).

A disordered region spans residues 1–34 (MKEEECSPLLSQDTAGREHPLTRNSPPTANIPCP). Residues 1–76 (MKEEECSPLL…LSTGSNCVKY (76 aa)) lie on the Cytoplasmic side of the membrane. Residues 77 to 97 (LIFLSNFLFSLPSLLALAAGL) traverse the membrane as a helical segment. Over 98-120 (WGLTVKRSQGIGWGGPVPTDPML) the chain is Extracellular. A helical transmembrane segment spans residues 121 to 141 (MLVLGGLVVSVVSLSGCLGAF). The Cytoplasmic portion of the chain corresponds to 142 to 152 (CENSCLLHWYC). Residues 153 to 173 (GAVLFCLALEALAGVLMVTLW) traverse the membrane as a helical segment. Residues 174 to 331 (KPLQDSLKYT…AAEDIEAGPL (158 aa)) lie on the Extracellular side of the membrane. 4 cysteine pairs are disulfide-bonded: Cys210-Cys277, Cys211-Cys241, Cys227-Cys235, and Cys242-Cys256. An N-linked (GlcNAc...) asparagine glycan is attached at Asn226.

Belongs to the tetraspanin (TM4SF) family. Interacts with ADAM10.

The protein resides in the cell membrane. Functionally, part of TspanC8 subgroup, composed of 6 members that interact with the transmembrane metalloprotease ADAM10. This interaction is required for ADAM10 exit from the endoplasmic reticulum and for enzymatic maturation and trafficking to the cell surface as well as substrate specificity. Different TspanC8/ADAM10 complexes have distinct substrates. This is Tetraspanin-10 (Tspan10) from Mus musculus (Mouse).